A 562-amino-acid chain; its full sequence is MCLSALILVSLAAFTAGAGHPSSPPMVDTVQGKVLGKYISLEGFTQPVAVFLGVPFAKPPLGSLRFAPPQPAEPWSSVKNATSYPPMCFQDPVTGQIVNDLLTNRKEKIPLQFSEDCLYLNIYTPADLTKSDRLPVMVWIHGGGLVLGGASTYDGLVLSTHENVVVVVIQYRLGIWGFFSTGDEHSRGNWGHLDQVAALHWVQDNIAKFGGDPGSVTIFGESAGGESVSVLVLSPLAKNLFQRAISESGVALTAGLVKKNTRPLAEKIAVISGCKNTTSAAMVHCLRQKTEEELLGTTLKLNLFKLDLHGDSRQSHPFVPTVLDGVLLPKMPEEILAEKNFNTVPYIVGINKQEFGWILPTMMNYPPSDVKLDQMTAMSLLKKSSFLLNLPEDAIAVAIEKYLRDKDYTGRNKDQLLELIGDVVFGVPSVIVSRGHRDAGAPTYMYEFQYSPSFSSEMKPDTVVGDHGDEIYSVFGAPILRGGTSEEEINLSKMMMKFWANFARNGNPNGQGLPHWPEYDQKEGYLQIGATTQQAQKLKEKEVAFWTELLAKKQLPTEHTEL.

The N-terminal stretch at 1-19 is a signal peptide; that stretch reads MCLSALILVSLAAFTAGAG. Asparagine 80 carries an N-linked (GlcNAc...) asparagine glycan. An intrachain disulfide couples cysteine 88 to cysteine 117. Serine 222 functions as the Acyl-ester intermediate in the catalytic mechanism. Cysteine 274 and cysteine 285 form a disulfide bridge. The N-linked (GlcNAc...) asparagine glycan is linked to asparagine 276. Catalysis depends on charge relay system residues glutamate 354 and histidine 467. An N-linked (GlcNAc...) asparagine glycan is attached at asparagine 490. Residues 559 to 562 carry the Prevents secretion from ER motif; the sequence is HTEL.

This sequence belongs to the type-B carboxylesterase/lipase family.

It localises to the endoplasmic reticulum lumen. Its subcellular location is the microsome membrane. The catalysed reaction is a carboxylic ester + H2O = an alcohol + a carboxylate + H(+). It carries out the reaction all-trans-retinyl hexadecanoate + H2O = all-trans-retinol + hexadecanoate + H(+). Functionally, involved in the detoxification of xenobiotics and in the activation of ester and amide prodrugs. Hydrolyzes retinyl esters. This is Carboxylesterase 1E from Mus musculus (Mouse).